Here is a 176-residue protein sequence, read N- to C-terminus: Inorganic pyrophosphatase (176 aa).

Positions 30, 44, and 56 each coordinate substrate. Residues Asp-66, Asp-71, and Asp-103 each contribute to the Mg(2+) site. Tyr-142 lines the substrate pocket.

It belongs to the PPase family. In terms of assembly, homohexamer. Requires Mg(2+) as cofactor.

The protein localises to the cytoplasm. It catalyses the reaction diphosphate + H2O = 2 phosphate + H(+). Functionally, catalyzes the hydrolysis of inorganic pyrophosphate (PPi) forming two phosphate ions. The sequence is that of Inorganic pyrophosphatase from Escherichia coli O6:H1 (strain CFT073 / ATCC 700928 / UPEC).